The primary structure comprises 505 residues: Dolichyl pyrophosphate Glc1Man9GlcNAc2 alpha-1,3-glucosyltransferase (505 aa).

Residues 1–3 (MAE) are Lumenal-facing. The helical transmembrane segment at 4-24 (IYPSLVQCAIVATAFKVLLFP) threads the bilayer. Residues 25-101 (AYKSTDFEVH…DSWQTVYFQR (77 aa)) lie on the Cytoplasmic side of the membrane. The helical transmembrane segment at 102–122 (WTVIVTELVLLYALQMFVDST) threads the bilayer. Topologically, residues 123-128 (PGVSKR) are lumenal. A helical transmembrane segment spans residues 129 to 149 (AAHAAAVSILLSPGLLIIDHI). At 150–152 (HFQ) the chain is on the cytoplasmic side. Residues 153–169 (YNGVMYGILIASLVLAK) form a helical membrane-spanning segment. Residues 170–173 (KKSS) lie on the Lumenal side of the membrane. The helical transmembrane segment at 174 to 194 (LLASGLVFAALLCMKHIYLYL) threads the bilayer. The Cytoplasmic segment spans residues 195–224 (APAYFVYLLRVYCLPPKLSPRSIFRIQFFN). The helical transmembrane segment at 225–245 (CVKLGGGIAAIFAAAFGPFAL) threads the bilayer. Residues 246–319 (KNQIPQIFSR…TSFAVLPDIT (74 aa)) lie on the Lumenal side of the membrane. Residues 320 to 340 (PRMCFVLTLLFQAIPLIKLFM) form a helical membrane-spanning segment. Residues 341-359 (RPTWEGFIGGVTLCGYASF) lie on the Cytoplasmic side of the membrane. A helical transmembrane segment spans residues 360–380 (LFGWHVHEKAILLVIIPFSLI). Residues 381–386 (ALKDRR) lie on the Lumenal side of the membrane. Residues 387-407 (YLGAFRPLAVAGHVSLFPLIF) traverse the membrane as a helical segment. Over 408-409 (TP) the chain is Cytoplasmic. The chain crosses the membrane as a helical span at residues 410-430 (AEFPIKTVYTIFWLVLFLMAF). The Lumenal segment spans residues 431–450 (DRLAPAPTRQRLFLFDRFST). The chain crosses the membrane as a helical span at residues 451–471 (AYITVSIPLIFYCSLMHGIIF). At 472–480 (GKSYEFLPL) the chain is on the cytoplasmic side. The helical transmembrane segment at 481-501 (MFTSSYSAIGVVGSWLGFMVV) threads the bilayer. Residues 502–505 (YFTE) are Lumenal-facing.

This sequence belongs to the ALG6/ALG8 glucosyltransferase family.

The protein resides in the endoplasmic reticulum membrane. The enzyme catalyses an alpha-D-Glc-(1-&gt;3)-alpha-D-Man-(1-&gt;2)-alpha-D-Man-(1-&gt;2)-alpha-D-Man-(1-&gt;3)-[alpha-D-Man-(1-&gt;2)-alpha-D-Man-(1-&gt;3)-[alpha-D-Man-(1-&gt;2)-alpha-D-Man-(1-&gt;6)]-alpha-D-Man-(1-&gt;6)]-beta-D-Man-(1-&gt;4)-beta-D-GlcNAc-(1-&gt;4)-alpha-D-GlcNAc-diphospho-di-trans,poly-cis-dolichol + a di-trans,poly-cis-dolichyl beta-D-glucosyl phosphate = an alpha-D-Glc-(1-&gt;3)-alpha-D-Glc-(1-&gt;3)-alpha-D-Man-(1-&gt;2)-alpha-D-Man-(1-&gt;2)-alpha-D-Man-(1-&gt;3)-[alpha-D-Man-(1-&gt;2)-alpha-D-Man-(1-&gt;3)-[alpha-D-Man-(1-&gt;2)-alpha-D-Man-(1-&gt;6)]-alpha-D-Man-(1-&gt;6)]-beta-D-Man-(1-&gt;4)-beta-D-GlcNAc-(1-&gt;4)-alpha-D-GlcNAc-diphospho-di-trans,poly-cis-dolichol + a di-trans,poly-cis-dolichyl phosphate + H(+). Its pathway is protein modification; protein glycosylation. Its function is as follows. Dolichyl pyrophosphate Glc1Man9GlcNAc2 alpha-1,3-glucosyltransferase that operates in the biosynthetic pathway of dolichol-linked oligosaccharides, the glycan precursors employed in protein asparagine (N)-glycosylation. The assembly of dolichol-linked oligosaccharides begins on the cytosolic side of the endoplasmic reticulum membrane and finishes in its lumen. The sequential addition of sugars to dolichol pyrophosphate produces dolichol-linked oligosaccharides containing fourteen sugars, including two GlcNAcs, nine mannoses and three glucoses. Once assembled, the oligosaccharide is transferred from the lipid to nascent proteins by oligosaccharyltransferases. In the lumen of the endoplasmic reticulum, adds the second glucose residue from dolichyl phosphate glucose (Dol-P-Glc) onto the lipid-linked oligosaccharide intermediate Glc(1)Man(9)GlcNAc(2)-PP-Dol to produce Glc(2)Man(9)GlcNAc(2)-PP-Dol. In Neurospora crassa (strain ATCC 24698 / 74-OR23-1A / CBS 708.71 / DSM 1257 / FGSC 987), this protein is Dolichyl pyrophosphate Glc1Man9GlcNAc2 alpha-1,3-glucosyltransferase (alg-8).